A 283-amino-acid chain; its full sequence is Non-selective voltage-gated ion channel VDAC3 (283 aa).

Cys2 carries the post-translational modification N-acetylcysteine. Position 4 is a phosphothreonine (Thr4). 3 positions are modified to N6-acetyllysine: Lys12, Lys15, and Lys20. 2 beta stranded membrane-spanning segments follow: residues 26-35 (MVKIDLKTKS) and 39-47 (VEFSTSGHA). Thr33 bears the Phosphothreonine mark. A Glycyl lysine isopeptide (Lys-Gly) (interchain with G-Cter in ubiquitin) cross-link involves residue Lys53. The next 3 membrane-spanning stretches (beta stranded) occupy residues 54–64 (ASGNLETKYKV), 69–76 (LIFTQKWN), and 80–89 (TLGTEISWEN). Lys90 is subject to N6-acetyllysine. Residues 95-104 (LKLTVDTIFV) traverse the membrane as a beta stranded segment. Residues Lys109 and Lys110 each participate in a glycyl lysine isopeptide (Lys-Gly) (interchain with G-Cter in ubiquitin) cross-link. A run of 10 beta stranded transmembrane segments spans residues 111-120 (SGKLKASYRR), 123-130 (FSVGSKVD), 137-145 (TIYGWAVLA), 150-158 (LAGYQMSFD), 163-175 (KLCQ…GYKA), 178-185 (FQLHTHVN), 189-198 (EFGGSIYQRV), 202-211 (IETSINLAWT), 218-227 (RFGIAAKYRL), and 231-238 (TSLSAKVN). The residue at position 241 (Ser241) is a Phosphoserine. NAD(+) contacts are provided by residues 242 to 244 (LIG) and 260 to 264 (SALVD). A run of 2 beta stranded transmembrane segments spans residues 242 to 251 (LIGLGYTQSL) and 254 to 263 (GVKLTLSALV). At Lys266 the chain carries N6-acetyllysine; alternate. Residue Lys266 forms a Glycyl lysine isopeptide (Lys-Gly) (interchain with G-Cter in ubiquitin); alternate linkage. Residues 273–282 (HKVGLGFELE) form a beta stranded membrane-spanning segment.

It belongs to the eukaryotic mitochondrial porin family. In terms of assembly, interacts with ARMC12 in a TBC1D21-dependent manner. Interacts with MISFA. Ubiquitinated by PRKN during mitophagy, leading to its degradation and enhancement of mitophagy. Deubiquitinated by USP30. As to expression, isoform 1 is widely expressed with strong expression in atrium and ascitic tumor, lower levels in brain and very low levels in liver and kidney. Isoform 2 is also widely expressed with highest levels in brain but no expression in kidney. Also expressed in flagella of epididymal sperm.

The protein resides in the mitochondrion outer membrane. The protein localises to the membrane. The catalysed reaction is chloride(in) = chloride(out). The enzyme catalyses K(+)(in) = K(+)(out). In terms of biological role, non-selective voltage-gated ion channel that mediates the transport of anions and cations through the mitochondrion outer membrane and plasma membrane. Forms a high-conducting channel with a stable open state and a voltage-induced closure with a mild preference for anions over cations. Involved in male fertility and sperm mitochondrial sheath formation. This chain is Non-selective voltage-gated ion channel VDAC3, found in Rattus norvegicus (Rat).